A 509-amino-acid chain; its full sequence is Putative Rieske 2Fe-2S iron-sulfur protein YhfW (509 aa).

Positions 423-509 (KPDVQFEDIS…IKPLKQIDLD (87 aa)) constitute a Rieske domain. [2Fe-2S] cluster-binding residues include C463, H465, C481, and H484. A disulfide bridge links C468 with C483.

It belongs to the Rieske iron-sulfur protein family. [2Fe-2S] cluster is required as a cofactor.

This is Putative Rieske 2Fe-2S iron-sulfur protein YhfW (yhfW) from Bacillus subtilis (strain 168).